A 2005-amino-acid polypeptide reads, in one-letter code: Sodium channel protein type 2 subunit alpha (2005 aa).

Residues 1-129 (MAQSVLVPPG…KLAIKILVHS (129 aa)) are Cytoplasmic-facing. Ser4 bears the Phosphoserine mark. Residues 28 to 61 (RIAEEKAKRPKQERKDEDDENGPKPNSDLEAGKS) are disordered. Residue Lys38 forms a Glycyl lysine isopeptide (Lys-Gly) (interchain with G-Cter in SUMO1) linkage. An I repeat occupies 111-456 (ILTPFNPIRK…QQMLEQLKKQ (346 aa)). Residues 130–148 (LFNMLIMCTILTNCVFMTM) traverse the membrane as a helical segment. Topologically, residues 149–155 (SNPPDWT) are extracellular. A helical transmembrane segment spans residues 156-176 (KNVEYTFTGIYTFESLIKILA). Topologically, residues 177-190 (RGFCLEDFTFLRDP) are cytoplasmic. The chain crosses the membrane as a helical span at residues 191–208 (WNWLDFTVITFAYVTEFV). The Extracellular portion of the chain corresponds to 209-214 (DLGNVS). Asn212 carries N-linked (GlcNAc...) asparagine glycosylation. Residues 215-231 (ALRTFRVLRALKTISVI) form a helical membrane-spanning segment. Topologically, residues 232-250 (PGLKTIVGALIQSVKKLSD) are cytoplasmic. A helical transmembrane segment spans residues 251–270 (VMILTVFCLSVFALIGLQLF). Topologically, residues 271–369 (MGNLRNKCLQ…PNYGYTSFDT (99 aa)) are extracellular. A disulfide bridge links Cys278 with Cys338. Residues Asn285, Asn291, Asn297, Asn303, Asn308, and Asn340 are each glycosylated (N-linked (GlcNAc...) asparagine). The pore-forming intramembrane region spans 370–394 (FSWAFLSLFRLMTQDFWENLYQLTL). Over 395 to 401 (RAAGKTY) the chain is Extracellular. The chain crosses the membrane as a helical span at residues 402–422 (MIFFVLVIFLGSFYLINLILA). At 423–759 (VVAMAYEEQN…HLVNLVVMDP (337 aa)) the chain is on the cytoplasmic side. Phosphoserine occurs at positions 468, 471, 484, 526, 528, 531, 553, 554, 558, 573, 576, 589, 610, 623, 686, 687, and 721. A disordered region spans residues 494-529 (SSKSEKELKNRRKKKKQKEQSGEEEKNDRVRKSESE). Positions 511 to 529 (KEQSGEEEKNDRVRKSESE) are enriched in basic and acidic residues. Positions 590–610 (ENDFADDEHSTFEDNDSRRDS) are disordered. Residues 596–610 (DEHSTFEDNDSRRDS) are compositionally biased toward basic and acidic residues. The stretch at 741–1013 (CCKPWLKVKH…QIAVGRMQKG (273 aa)) is one II repeat. Residues 760 to 778 (FVDLAITICIVLNTLFMAM) traverse the membrane as a helical segment. The Extracellular segment spans residues 779 to 789 (EHYPMTEQFSS). Residues 790–809 (VLSVGNLVFTGIFTAEMFLK) form a helical membrane-spanning segment. At 810–823 (IIAMDPYYYFQEGW) the chain is on the cytoplasmic side. The helical transmembrane segment at 824-843 (NIFDGFIVSLSLMELGLANV) threads the bilayer. The Extracellular portion of the chain corresponds to 844 to 845 (EG). The chain crosses the membrane as a helical span at residues 846–863 (LSVLRSFRLLRVFKLAKS). The Cytoplasmic portion of the chain corresponds to 864-879 (WPTLNMLIKIIGNSVG). The chain crosses the membrane as a helical span at residues 880 to 898 (ALGNLTLVLAIIVFIFAVV). Topologically, residues 899–927 (GMQLFGKSYKECVCKISNDCELPRWHMHD) are extracellular. A disulfide bridge links Cys912 with Cys918. Residues 917–918 (DC) form a binds SCN2B region. The pore-forming intramembrane region spans 928 to 948 (FFHSFLIVFRVLCGEWIETMW). Topologically, residues 949 to 961 (DCMEVAGQTMCLT) are extracellular. A disulfide bond links Cys950 and Cys959. The helical transmembrane segment at 962-982 (VFMMVMVIGNLVVLNLFLALL) threads the bilayer. Residues 983–1209 (LSSFSSDNLA…TCYKIVEHNW (227 aa)) lie on the Cytoplasmic side of the membrane. The segment at 1120–1165 (EEFSSESDMEESKEKLNATSSSEGSTVDIGAPAEGEQPEVEPEESL) is disordered. A compositionally biased stretch (acidic residues) spans 1155 to 1165 (EQPEVEPEESL). One copy of the III repeat lies at 1190–1504 (KGKLWWNLRK…KKYYNAMKKL (315 aa)). The helical transmembrane segment at 1210–1227 (FETFIVFMILLSSGALAF) threads the bilayer. Topologically, residues 1228–1240 (EDIYIEQRKTIKT) are extracellular. The helical transmembrane segment at 1241-1259 (MLEYADKVFTYIFILEMLL) threads the bilayer. At 1260–1273 (KWVAYGFQVYFTNA) the chain is on the cytoplasmic side. A helical transmembrane segment spans residues 1274–1292 (WCWLDFLIVDVSLVSLTAN). The Extracellular segment spans residues 1293–1300 (ALGYSELG). Residues 1301-1319 (AIKSLRTLRALRPLRALSR) form a helical membrane-spanning segment. Topologically, residues 1320–1336 (FEGMRVVVNALLGAIPS) are cytoplasmic. A helical membrane pass occupies residues 1337–1356 (IMNVLLVCLIFWLIFSIMGV). Residues 1357–1408 (NLFAGKFYHCINYTTGEMFDVSVVNNYSECKALIESNQTARWKNVKVNFDNV) lie on the Extracellular side of the membrane. Cys1366 and Cys1386 are disulfide-bonded. N-linked (GlcNAc...) asparagine glycans are attached at residues Asn1368, Asn1382, and Asn1393. The pore-forming intramembrane region spans 1409 to 1430 (GLGYLSLLQVATFKGWMDIMYA). The Extracellular portion of the chain corresponds to 1431-1447 (AVDSRNVELQPKYEDNL). The chain crosses the membrane as a helical span at residues 1448–1469 (YMYLYFVIFIIFGSFFTLNLFI). Residues 1470–1532 (GVIIDNFNQQ…MVFDFVTKQV (63 aa)) lie on the Cytoplasmic side of the membrane. Ser1506 is modified (phosphoserine; by PKC). The stretch at 1513–1811 (IPRPANKFQG…WEKFDPDATQ (299 aa)) is one IV repeat. Residues 1533–1550 (FDISIMILICLNMVTMMV) form a helical membrane-spanning segment. Residues 1551–1561 (ETDDQSQEMTN) are Extracellular-facing. The helical transmembrane segment at 1562–1580 (ILYWINLVFIVLFTGECVL) threads the bilayer. The Cytoplasmic segment spans residues 1581–1592 (KLISLRYYYFTI). Residues 1593-1610 (GWNIFDFVVVILSIVGMF) traverse the membrane as a helical segment. At 1611 to 1623 (LAELIEKYFVSPT) the chain is on the extracellular side. The chain crosses the membrane as a helical span at residues 1624 to 1640 (LFRVIRLARIGRILRLI). Over 1641–1659 (KGAKGIRTLLFALMMSLPA) the chain is Cytoplasmic. The helical transmembrane segment at 1660 to 1677 (LFNIGLLLFLVMFIYAIF) threads the bilayer. At 1678–1699 (GMSNFAYVKREVGIDDMFNFET) the chain is on the extracellular side. The pore-forming intramembrane region spans 1700–1722 (FGNSMICLFQITTSAGWDGLLAP). Residues 1723–1752 (ILNSGPPDCDPDKDHPGSSVKGDCGNPSVG) are Extracellular-facing. A disulfide bridge links Cys1731 with Cys1746. A helical membrane pass occupies residues 1753-1775 (IFFFVSYIIISFLVVVNMYIAVI). Topologically, residues 1776-2005 (LENFSVATEE…KGKDIRESKK (230 aa)) are cytoplasmic. In terms of domain architecture, IQ spans 1905-1934 (EEVSAIIIQRAYRRYLLKQKVKKVSSIYKK). Residue Ser1930 is modified to Phosphoserine. Basic and acidic residues predominate over residues 1935-1964 (DKGKECDGTPIKEDTLIDKLNENSTPEKTD). Residues 1935–2005 (DKGKECDGTP…KGKDIRESKK (71 aa)) form a disordered region. A phosphothreonine mark is found at Thr1943, Thr1963, and Thr1966. Ser1971 is subject to Phosphoserine. Residues 1979-2005 (TKPEKEKFEKDKSEKEDKGKDIRESKK) are compositionally biased toward basic and acidic residues.

It belongs to the sodium channel (TC 1.A.1.10) family. Nav1.2/SCN2A subfamily. As to quaternary structure, heterooligomer of a large alpha subunit and a smaller beta subunit. Heterooligomer with SCN2B or SCN4B; disulfide-linked. Heterooligomer with SCN1B or SCN3B; non-covalently linked. Interacts with NEDD4L. Interacts with CALM. Interacts with TMEM233. Interacts with the conotoxin GVIIJ. Interacts with the spider beta/delta-theraphotoxin-Pre1a. Interacts with the conotoxin KIIIA. Interacts with the spider protoxin-II. In terms of processing, may be ubiquitinated by NEDD4L; which would promote its endocytosis. Phosphorylation at Ser-1506 by PKC in a highly conserved cytoplasmic loop slows inactivation of the sodium channel and reduces peak sodium currents. Post-translationally, sumoylated at Lys-38. Sumoylation is induced by hypoxia, increases voltage-gated sodium current and mediates the early response to acute hypoxia in neurons. Sumoylated SCN2A is located at the cell membrane.

It localises to the cell membrane. It catalyses the reaction Na(+)(in) = Na(+)(out). In terms of biological role, mediates the voltage-dependent sodium ion permeability of excitable membranes. Assuming opened or closed conformations in response to the voltage difference across the membrane, the protein forms a sodium-selective channel through which Na(+) ions may pass in accordance with their electrochemical gradient. Implicated in the regulation of hippocampal replay occurring within sharp wave ripples (SPW-R) important for memory. In Homo sapiens (Human), this protein is Sodium channel protein type 2 subunit alpha.